The primary structure comprises 227 residues: Lipoprotein-releasing system ATP-binding protein LolD (227 aa).

An ABC transporter domain is found at 8–226 (IEVTNLCKSF…VVHMADGRIT (219 aa)). 44–51 (GASGAGKT) is a binding site for ATP.

Belongs to the ABC transporter superfamily. Lipoprotein translocase (TC 3.A.1.125) family. The complex is composed of two ATP-binding proteins (LolD) and two transmembrane proteins (LolC and LolE).

It is found in the cell inner membrane. In terms of biological role, part of the ABC transporter complex LolCDE involved in the translocation of mature outer membrane-directed lipoproteins, from the inner membrane to the periplasmic chaperone, LolA. Responsible for the formation of the LolA-lipoprotein complex in an ATP-dependent manner. The sequence is that of Lipoprotein-releasing system ATP-binding protein LolD from Syntrophotalea carbinolica (strain DSM 2380 / NBRC 103641 / GraBd1) (Pelobacter carbinolicus).